We begin with the raw amino-acid sequence, 100 residues long: MELTPREKDKLLLFTAGLVAERRLAKGLKLNYPEAVALISCAIMEGAREGKTVAQLMSEGRTVLTAEQVMEGVPEMIKDVQVECTFPDGTKLVSIHSPIV.

It belongs to the urease gamma subunit family. As to quaternary structure, probable heterotrimer of UreA (gamma), UreB (beta) and UreC (alpha) subunits. Three heterotrimers associate to form the active enzyme. The trimeric urease interacts with an accessory complex composed of UreD, UreF and UreG, which is required for the assembly of the nickel containing metallocenter of UreC. The UreE protein may also play a direct role in nickel transfer to the urease apoprotein.

It is found in the cytoplasm. The catalysed reaction is urea + 2 H2O + H(+) = hydrogencarbonate + 2 NH4(+). It participates in nitrogen metabolism; urea degradation; CO(2) and NH(3) from urea (urease route): step 1/1. The polypeptide is Urease subunit gamma (Proteus mirabilis (strain HI4320)).